The chain runs to 470 residues: ATP synthase subunit beta (470 aa).

An ATP-binding site is contributed by 157 to 164 (GGAGVGKT).

This sequence belongs to the ATPase alpha/beta chains family. As to quaternary structure, F-type ATPases have 2 components, CF(1) - the catalytic core - and CF(0) - the membrane proton channel. CF(1) has five subunits: alpha(3), beta(3), gamma(1), delta(1), epsilon(1). CF(0) has three main subunits: a(1), b(2) and c(9-12). The alpha and beta chains form an alternating ring which encloses part of the gamma chain. CF(1) is attached to CF(0) by a central stalk formed by the gamma and epsilon chains, while a peripheral stalk is formed by the delta and b chains.

It localises to the cell inner membrane. It carries out the reaction ATP + H2O + 4 H(+)(in) = ADP + phosphate + 5 H(+)(out). Its function is as follows. Produces ATP from ADP in the presence of a proton gradient across the membrane. The catalytic sites are hosted primarily by the beta subunits. This chain is ATP synthase subunit beta, found in Geobacter sp. (strain M21).